The following is a 1701-amino-acid chain: Coiled-coil domain-containing protein 180 (1701 aa).

The disordered stretch occupies residues 1-35; it reads MRGGENRPPARVQSSSEELELRHQSLDAFPGRRLP. A coiled-coil region spans residues 171–198; the sequence is QRQAEHKRKSYESALASFQEEIAQVGKE. Disordered regions lie at residues 657–808, 1272–1291, and 1319–1354; these read EKPS…DKEE, HHCDKDPSQTGRGAWACGSR, and GFKRHRCQPENSGKKAVPSASATSAGSFTPHPKPNK. Residues 661-671 are compositionally biased toward basic residues; sequence QKRVKKLRKKQ. Residues 672–682 are compositionally biased toward basic and acidic residues; sequence GSKEDMTRSEE. Over residues 683–692 the composition is skewed to polar residues; sequence SISSGTSTAR. The span at 696-705 shows a compositional bias: acidic residues; that stretch reads EVEEENDQEM. A compositionally biased stretch (basic and acidic residues) spans 755-766; that stretch reads ENVKGQGEKKEE. Positions 757–804 form a coiled coil; it reads VKGQGEKKEESEEEDEKEEEEEEEKLEEEKEEKEAQEEQESLSVGEEE. Positions 767–808 are enriched in acidic residues; that stretch reads SEEEDEKEEEEEEEKLEEEKEEKEAQEEQESLSVGEEEDKEE.

This chain is Coiled-coil domain-containing protein 180 (CCDC180), found in Homo sapiens (Human).